The following is a 234-amino-acid chain: Sugar fermentation stimulation protein homolog (234 aa).

The protein belongs to the SfsA family.

The chain is Sugar fermentation stimulation protein homolog from Idiomarina loihiensis (strain ATCC BAA-735 / DSM 15497 / L2-TR).